Here is a 611-residue protein sequence, read N- to C-terminus: MSVQVVSAAAAAKVPEVELKDLSPSEAEPQLGLSTAAVSAMAPPAGGGDPEAPAPAAERPPAPGPGSGPAAALSPAAGKVPQASAMKRSDPHHQHQRHRDGGEALVSPDGTVTEAPRTVKKQIQFADQKQEFNKRPTKIGRRSLSRSISQSSTDSYSSAASYTDSSDDETSPRDKQQKNSKGNSDFCVKNIKQAEFGRREIEIAEQEMPALMALRKRAQGEKPLAGAKIVGCTHITAQTAVLMETLGALGAQCRWAACNIYSTLNEVAAALAESGFPVFAWKGESEDDFWWCIDRCVNVEGWQPNMILDDGGDLTHWIYKKYPNMFKKIKGIVEESVTGVHRLYQLSKAGKLCVPAMNVNDSVTKQKFDNLYCCRESILDGLKRTTDMMFGGKQVVVCGYGEVGKGCCAALKAMGSIVYVTEIDPICALQACMDGFRLVKLNEVIRQVDIVITCTGNKNVVTREHLDRMKNSCIVCNMGHSNTEIDVASLRTPELTWERVRSQVDHVIWPDGKRIILLAEGRLLNLSCSTVPTFVLSITATTQALALIELYNAPEGRYKQDVYLLPKKMDEYVASLHLPTFDAHLTELTDEQAKYLGLNKNGPFKPNYYRY.

Composition is skewed to low complexity over residues 1-14 (MSVQVVSAAAAAKV), 40-57 (AMAPPAGGGDPEAPAPAA), and 68-78 (GPAAALSPAAG). The interval 1–184 (MSVQVVSAAA…KQQKNSKGNS (184 aa)) is disordered. Ser2 carries the post-translational modification N-acetylserine. Residues 2-109 (SVQVVSAAAA…DGGEALVSPD (108 aa)) are LISN domain, inhibits interaction with ITPR1. The residue at position 107 (Ser107) is a Phosphoserine. Basic residues predominate over residues 135-144 (RPTKIGRRSL). Over residues 145 to 164 (SRSISQSSTDSYSSAASYTD) the composition is skewed to low complexity. A phosphoserine mark is found at Ser149, Ser152, Ser155, and Ser158. Substrate-binding residues include Thr236, Asp310, and Glu335. 336–338 (SVT) contacts NAD(+). Residues Lys365 and Asp369 each contribute to the substrate site. Residues Asn370, 401-406 (GEVGKG), Glu422, Asn457, 478-479 (MG), and Asn525 each bind NAD(+).

It belongs to the adenosylhomocysteinase family. In terms of assembly, homotetramer. Forms heteromultimers with AHCYL1 (via the C-terminal region). Interacts with ITPR1; with lower affinity than AHCYL1 and maybe via ITPR1. Interacts with SLC4A4. Interacts with ZCCHC4. NAD(+) serves as cofactor. Post-translationally, phosphorylated during neuronal differentiation at the LISN domain. As to expression, expressed in parotid and acinar cells (at protein level).

The protein localises to the cytoplasm. It is found in the microsome. It carries out the reaction S-adenosyl-L-homocysteine + H2O = L-homocysteine + adenosine. The protein operates within amino-acid biosynthesis; L-homocysteine biosynthesis; L-homocysteine from S-adenosyl-L-homocysteine: step 1/1. May regulate the electrogenic sodium/bicarbonate cotransporter SLC4A4 activity and Mg(2+)-sensitivity. On the contrary of its homolog AHCYL1, does not regulate ITPR1 sensitivity to inositol 1,4,5-trisphosphate. The protein is Adenosylhomocysteinase 3 of Bos taurus (Bovine).